A 503-amino-acid chain; its full sequence is Depupylase (503 aa).

Mg(2+) contacts are provided by Glu-8 and Tyr-92. Residue Asp-94 is the Proton acceptor of the active site. Glu-99 contacts Mg(2+). ATP is bound at residue 101-102 (ST). His-155 is a binding site for Mg(2+). ATP is bound by residues Asn-157 and Arg-239. Mg(2+) is bound at residue His-241.

The protein belongs to the Pup ligase/Pup deamidase family. Pup deamidase subfamily. Likely interacts with the C-terminal half of the prokaryotic ubiquitin-like protein Pup. Requires ATP as cofactor.

The protein operates within protein degradation; proteasomal Pup-dependent pathway. In terms of biological role, displays depupylase (DPUP) activity, removing conjugated Pup from target proteins; is thus involved in the recycling of Pup and may function similarly to deubiquitinases (DUBs) in eukaryotes to prevent or promote proteasomal degradation of certain proteins. Is also able to catalyze the deamidation of the C-terminal glutamine to glutamate in a variant of the prokaryotic ubiquitin-like protein Pup; however, since Pup from A.cellulolyticus possesses a C-terminal glutamate, this deamidase activity may be of no significance in vivo. The protein is Depupylase (dop) of Acidothermus cellulolyticus (strain ATCC 43068 / DSM 8971 / 11B).